The primary structure comprises 488 residues: MPEDVQNRTRIKSERYESGVIPYAKMGYWDADYNVKDTDILALFRITPQPGVDPVEARAAVAGESSTATWTVVWTDLLTACDIYRAKAYRVDPVPGTSDQFFAYIAYECDLFEEGSLANLTASIIGNVFGFKAVKALRLEDMRIPYAYLKTFQGPATGVVVERERLDKFGRPLLGATVKPKLGLSGKNYGRVVYEGLAGGLDFLKDDENINSQPFMRWKERFLYCMEGVNRAAAATGEVKGSYLNITAATMEQMYERAEYAHSIGSVIVMIDLVIGYTAIQSMAIWARKYEMILHLHRAGNSTYARQKNHGINFRVICKWMRMCGVDHIHAGTVVGKLEGDPLMVKGFYNSLLLTHLKINLAEGLFFDMDWAALRKCVPVASGGIHCGQMHQLLYYLGDDVVLQFGGGTIGHPDGIQSGATANRVALESMVLARNEGRDYVGEGPEILRRAAATCGPLKAALDLWKDITFDYTSTDTPDFVEVATESR.

2 residues coordinate substrate: Asn127 and Thr177. Residue Lys179 is the Proton acceptor of the active site. Lys181 lines the substrate pocket. The Mg(2+) site is built by Lys205, Asp207, and Glu208. At Lys205 the chain carries N6-carboxylysine. His297 acts as the Proton acceptor in catalysis. Substrate is bound by residues Arg298, His330, and Ser382.

The protein belongs to the RuBisCO large chain family. Type I subfamily. In terms of assembly, heterohexadecamer of 8 large chains and 8 small chains. Requires Mg(2+) as cofactor.

The protein resides in the plastid. It localises to the chloroplast. It catalyses the reaction 2 (2R)-3-phosphoglycerate + 2 H(+) = D-ribulose 1,5-bisphosphate + CO2 + H2O. It carries out the reaction D-ribulose 1,5-bisphosphate + O2 = 2-phosphoglycolate + (2R)-3-phosphoglycerate + 2 H(+). Functionally, ruBisCO catalyzes two reactions: the carboxylation of D-ribulose 1,5-bisphosphate, the primary event in carbon dioxide fixation, as well as the oxidative fragmentation of the pentose substrate in the photorespiration process. Both reactions occur simultaneously and in competition at the same active site. The polypeptide is Ribulose bisphosphate carboxylase large chain (Pylaiella littoralis (Seaweed)).